We begin with the raw amino-acid sequence, 268 residues long: Undecaprenyl-diphosphatase (268 aa).

The next 7 membrane-spanning stretches (helical) occupy residues 5–25 (SIIS…IPVS), 43–63 (GNTF…LVYF), 84–104 (LSVL…HGFI), 109–129 (FETP…LYVI), 184–204 (AAEF…ALDL), 213–233 (IDDI…GIFV), and 248–268 (PFAI…WLLG).

This sequence belongs to the UppP family.

Its subcellular location is the cell inner membrane. The catalysed reaction is di-trans,octa-cis-undecaprenyl diphosphate + H2O = di-trans,octa-cis-undecaprenyl phosphate + phosphate + H(+). Its function is as follows. Catalyzes the dephosphorylation of undecaprenyl diphosphate (UPP). Confers resistance to bacitracin. The sequence is that of Undecaprenyl-diphosphatase from Sinorhizobium medicae (strain WSM419) (Ensifer medicae).